A 384-amino-acid chain; its full sequence is S-adenosylmethionine synthase (384 aa).

H15 lines the ATP pocket. D17 is a Mg(2+) binding site. Residue E43 participates in K(+) binding. L-methionine-binding residues include E56 and Q99. The segment at 99–109 (QSPDINQGVDR) is flexible loop. Residues 164 to 166 (DAK), 231 to 232 (RF), D240, 246 to 247 (RK), A263, and K267 contribute to the ATP site. D240 is an L-methionine binding site. K271 contributes to the L-methionine binding site.

Belongs to the AdoMet synthase family. Homotetramer; dimer of dimers. Mg(2+) is required as a cofactor. It depends on K(+) as a cofactor.

It is found in the cytoplasm. The catalysed reaction is L-methionine + ATP + H2O = S-adenosyl-L-methionine + phosphate + diphosphate. It functions in the pathway amino-acid biosynthesis; S-adenosyl-L-methionine biosynthesis; S-adenosyl-L-methionine from L-methionine: step 1/1. Catalyzes the formation of S-adenosylmethionine (AdoMet) from methionine and ATP. The overall synthetic reaction is composed of two sequential steps, AdoMet formation and the subsequent tripolyphosphate hydrolysis which occurs prior to release of AdoMet from the enzyme. This is S-adenosylmethionine synthase from Shewanella piezotolerans (strain WP3 / JCM 13877).